A 22-amino-acid chain; its full sequence is Phospholipase A2 (22 aa).

The protein belongs to the phospholipase A2 family. Group II subfamily. The cofactor is Ca(2+). Seven disulfide bonds are present. In terms of tissue distribution, expressed by the venom gland.

The protein resides in the secreted. It catalyses the reaction a 1,2-diacyl-sn-glycero-3-phosphocholine + H2O = a 1-acyl-sn-glycero-3-phosphocholine + a fatty acid + H(+). Its function is as follows. Snake venom phospholipase A2 (PLA2) that inhibits neuromuscular transmission by blocking acetylcholine release from the nerve termini. PLA2 catalyzes the calcium-dependent hydrolysis of the 2-acyl groups in 3-sn-phosphoglycerides. The protein is Phospholipase A2 of Daboia siamensis (Eastern Russel's viper).